The sequence spans 208 residues: Adenylate kinase (208 aa).

10–15 is a binding site for ATP; the sequence is GAGKGT. The interval 30-59 is NMP; it reads STGEMLRAAVAAGTPVGLKAKDVMASGGLV. AMP-binding positions include Thr31, Arg36, 57–59, 85–88, and Gln92; these read GLV and GFPR. Residues 126–142 form an LID region; that stretch reads SRVAEMTARGEQVRADD. Arg127 provides a ligand contact to ATP. 2 residues coordinate AMP: Arg139 and Arg150. An ATP-binding site is contributed by Met178.

The protein belongs to the adenylate kinase family. As to quaternary structure, monomer.

It is found in the cytoplasm. The enzyme catalyses AMP + ATP = 2 ADP. The protein operates within purine metabolism; AMP biosynthesis via salvage pathway; AMP from ADP: step 1/1. Catalyzes the reversible transfer of the terminal phosphate group between ATP and AMP. Plays an important role in cellular energy homeostasis and in adenine nucleotide metabolism. The protein is Adenylate kinase of Nitrobacter hamburgensis (strain DSM 10229 / NCIMB 13809 / X14).